A 126-amino-acid polypeptide reads, in one-letter code: uncharacterized protein (126 aa).

Residues 19–126 enclose the HIT domain; it reads IFERIIEGAV…LGGGLLGSIA (108 aa). Residues 111–115 carry the Histidine triad motif motif; the sequence is HLHIH.

This is an uncharacterized protein from Chlamydia muridarum (strain MoPn / Nigg).